The sequence spans 112 residues: Large ribosomal subunit protein uL22 (112 aa).

This sequence belongs to the universal ribosomal protein uL22 family. Part of the 50S ribosomal subunit.

In terms of biological role, this protein binds specifically to 23S rRNA; its binding is stimulated by other ribosomal proteins, e.g. L4, L17, and L20. It is important during the early stages of 50S assembly. It makes multiple contacts with different domains of the 23S rRNA in the assembled 50S subunit and ribosome. Functionally, the globular domain of the protein is located near the polypeptide exit tunnel on the outside of the subunit, while an extended beta-hairpin is found that lines the wall of the exit tunnel in the center of the 70S ribosome. The protein is Large ribosomal subunit protein uL22 of Lawsonia intracellularis (strain PHE/MN1-00).